We begin with the raw amino-acid sequence, 77 residues long: Apelin (77 aa).

Residues 1–22 (MNVKILTLVIVLVVSLLCSASA) form the signal peptide. Positions 21-77 (SAGPMASTEHSKEIEEVGSMRTPLRQNPARAGRSQRPAGWRRRRPRPRLSHKGPMPF) are disordered. Over residues 59-71 (GWRRRRPRPRLSH) the composition is skewed to basic residues.

Belongs to the apelin family.

The protein resides in the secreted. It is found in the extracellular space. Functionally, peptide hormone that functions as endogenous ligand for the G-protein-coupled apelin receptor (aplnra and/or aplnrb), that plays a role in cadiovascular homeostasis. Functions as a balanced agonist activating both G(i) protein pathway and beta-arrestin pathway of APLNR. Downstream G proteins activation, apelin can inhibit cAMP production and activate key intracellular effectors such as ERKs. On the other hand, APLNR activation induces beta-arrestin recruitment to the membrane leading to desensitization and internalization of the receptor. Apelin blunts cardiac hypertrophic induction from APLNR on response to pathological stimuli, but also induces myocardial hypertrophy under normal conditions. Involved in the regulation of cardiac precursor cell movements during gastrulation and heart morphogenesis. Plays a role in early coronary blood vessels formation. Mediates myocardial contractility in an ERK1/2-dependent manner. May also have a role in the central control of body fluid homeostasis. In Danio rerio (Zebrafish), this protein is Apelin.